Consider the following 1238-residue polypeptide: uncharacterized protein (1238 aa).

6 disordered regions span residues 1–38, 122–156, 229–439, 660–1016, 1051–1083, and 1098–1191; these read MSSK…DISS, SSTP…RPSF, PKNN…KNKE, KNKL…TGAA, EEED…KLNS, and KKSG…NASR. Low complexity-rich tracts occupy residues 10–26, 129–149, and 234–276; these read NKNN…NNNN, LSPF…QSPL, and QIDS…TQSQ. The span at 317–343 shows a compositional bias: polar residues; the sequence is ELQNQTQINKSKQDLTNISQKINITTS. Residues 344–361 are compositionally biased toward basic and acidic residues; it reads QHDKDDLGEYRMSEKGGG. Acidic residues predominate over residues 362 to 372; the sequence is DDGDDDDDYDN. Residues 383-394 are compositionally biased toward basic residues; the sequence is TNKKQQQQHHHK. Over residues 395–416 the composition is skewed to basic and acidic residues; that stretch reads GKEESQSEYYEKEKEKEKEDIA. Composition is skewed to low complexity over residues 417–435, 678–691, and 712–792; these read TTRA…NNIN, QQQQ…QQQE, and QPSQ…QEKQ. Over residues 793–805 the composition is skewed to basic and acidic residues; that stretch reads QSQEKHQSQEKHQ. Low complexity-rich tracts occupy residues 806-859 and 882-906; these read SQQS…SQQK and SQSQ…QSQR. Residues 916–927 show a composition bias toward acidic residues; it reads ENQDSENLDDTV. Positions 929-944 are enriched in polar residues; the sequence is MNYNQIPSTLDHSTLQ. A compositionally biased stretch (basic and acidic residues) spans 966-975; it reads EIERRRRELA. Positions 976 to 990 are enriched in acidic residues; it reads GEDSDEEFEILDEDQ. 2 stretches are compositionally biased toward low complexity: residues 1062-1083 and 1108-1121; these read QNNN…KLNS and SSSS…NKKN. A compositionally biased stretch (polar residues) spans 1123 to 1133; the sequence is PQPTKSVNKPR. Residues 1142–1181 show a composition bias toward low complexity; the sequence is SQNRQKQSEQQQQQPQQQPQLPQQQQQQQQQQQLRQQQNE. Over residues 1182–1191 the composition is skewed to polar residues; that stretch reads NTISSLNASR.

This is an uncharacterized protein from Dictyostelium discoideum (Social amoeba).